A 511-amino-acid chain; its full sequence is uncharacterized protein (511 aa).

Residues 59–79 (VPVAANDDQPDGSRQSVRGRQ) are disordered.

This sequence belongs to the transposase 25 family.

This is an uncharacterized protein from Sinorhizobium fredii (strain NBRC 101917 / NGR234).